Here is a 430-residue protein sequence, read N- to C-terminus: Septin-14 (430 aa).

The region spanning 48-313 is the Septin-type G domain; that stretch reads KGFSFNILCV…ECYRSNRLQK (266 aa). The interval 58 to 65 is G1 motif; that stretch reads GETGIGKT. Residues 58 to 65, glycine 113, 194 to 202, glycine 246, and arginine 261 each bind GTP; these read GETGIGKT and KADSLSKND. Positions 110-113 are G3 motif; the sequence is KTVG. Residues 193 to 196 form a G4 motif region; it reads AKAD. The stretch at 329–410 forms a coiled coil; it reads QEMYEAKRRE…IIDFYKMKAA (82 aa). Residues 367–430 are required for interaction with SEPTIN4. Required for migration of cortical neurons during corticogenesis; the sequence is DAEKELQDKF…NIKKDKDRKK (64 aa).

It belongs to the TRAFAC class TrmE-Era-EngA-EngB-Septin-like GTPase superfamily. Septin GTPase family. As to quaternary structure, septins polymerize into heterooligomeric protein complexes that form filaments, and can associate with cellular membranes, actin filaments and microtubules. GTPase activity is required for filament formation. Interacts with ACTN4. Interacts with SEPTIN9. Interacts (via C-terminus) with SEPTIN4. Expressed in the testis and brain including the cerebrum, hippocampus and cerebellum (at protein level).

The protein resides in the cytoplasm. Its subcellular location is the cytoskeleton. It localises to the cell projection. The protein localises to the axon. It is found in the dendrite. The protein resides in the perikaryon. Its subcellular location is the perinuclear region. It localises to the cytoplasmic vesicle. The protein localises to the secretory vesicle. It is found in the acrosome. Functionally, filament-forming cytoskeletal GTPase. Involved in the migration of cortical neurons and the formation of neuron leading processes during embryonic development. Plays a role in sperm head formation during spermiogenesis, potentially via facilitating localization of ACTN4 to cell filaments. This chain is Septin-14, found in Mus musculus (Mouse).